The primary structure comprises 434 residues: Serine/threonine transporter SstT (434 aa).

9 helical membrane-spanning segments follow: residues 14–34 (IVIGIIVGAVLGVMVPSWSFI), 41–61 (FVGALKAIAPLLVFLLIMSAI), 72–92 (FGTVIVLYLSATLFSSIAAVA), 135–155 (ALVEGNYLAILFWSLLIGSGL), 172–192 (TVSAVAQNVIQFAPFGIVGLL), 210–230 (LLMLLVATMVFVYLVVYPFMV), 282–302 (ISIPLGGSANSGGAAITVSIM), 316–336 (IFLALLLCFLSAISATGVSGI), and 351–371 (FGISNDIAMQVVGIGFIIGVV). The disordered stretch occupies residues 413–434 (GKGTAEVVTPEKTNEAEESEQV).

This sequence belongs to the dicarboxylate/amino acid:cation symporter (DAACS) (TC 2.A.23) family.

It is found in the cell membrane. It carries out the reaction L-serine(in) + Na(+)(in) = L-serine(out) + Na(+)(out). The enzyme catalyses L-threonine(in) + Na(+)(in) = L-threonine(out) + Na(+)(out). Its function is as follows. Involved in the import of serine and threonine into the cell, with the concomitant import of sodium (symport system). This Lacticaseibacillus casei (strain BL23) (Lactobacillus casei) protein is Serine/threonine transporter SstT.